Reading from the N-terminus, the 318-residue chain is MISINEISYSIVEEMLDFAEDYRIEPHTLANDSVVIDCGVKAKAGYEAGLLFTQVCMGGLAQTSLTHKKLKHEVFYPFIEVSTDFPAIACLAAQKAGWRISQDGYFAMGSGPARALALKPKHTYEVIEYEDDYDFAVIALEADKLPNEKVMDYIASECGVDSSDVVALVAPTNSPVGSVQIAGRVVEMAIYKLAELGFDTRHIVSAFGSAPIPPVKKDAAVAMGTTNDASIYHGSVTLTVDGGNIKDFVPKIPSSTSKDYGKPFYTVFKEAKFDFYKLDPGIFAPAEVVVNDISTGETYIAGKINADVCMESFGFKKL.

The protein belongs to the MCH family.

The protein resides in the cytoplasm. The enzyme catalyses 5,10-methenyl-5,6,7,8-tetrahydromethanopterin + H2O = N(5)-formyl-5,6,7,8-tetrahydromethanopterin + H(+). It participates in one-carbon metabolism; methanogenesis from CO(2); 5,10-methenyl-5,6,7,8-tetrahydromethanopterin from CO(2): step 3/3. In terms of biological role, catalyzes the reversible interconversion of 5-formyl-H(4)MPT to methenyl-H(4)MPT(+). This chain is Methenyltetrahydromethanopterin cyclohydrolase, found in Methanocella arvoryzae (strain DSM 22066 / NBRC 105507 / MRE50).